Reading from the N-terminus, the 220-residue chain is 7-cyano-7-deazaguanine synthase (220 aa).

Residue 7-17 participates in ATP binding; that stretch reads LSGGLDSAVCL. Zn(2+)-binding residues include cysteine 191, cysteine 199, cysteine 202, and cysteine 205.

This sequence belongs to the QueC family. As to quaternary structure, homodimer. Requires Zn(2+) as cofactor.

The enzyme catalyses 7-carboxy-7-deazaguanine + NH4(+) + ATP = 7-cyano-7-deazaguanine + ADP + phosphate + H2O + H(+). It participates in purine metabolism; 7-cyano-7-deazaguanine biosynthesis. Its function is as follows. Catalyzes the ATP-dependent conversion of 7-carboxy-7-deazaguanine (CDG) to 7-cyano-7-deazaguanine (preQ(0)). This chain is 7-cyano-7-deazaguanine synthase, found in Desulforudis audaxviator (strain MP104C).